The chain runs to 259 residues: MAKINVYSLKGDITEEIELPEIFEEEYRPDVIKRAVISMQTARIQPWGTDPMAGKRTTAESFGSGRGAAMVPRVKGSSKAAFVPQAIGGRKAHPPRVNTIYHEKINKKERTLAIRSAIAATANKELVEQRGHQVSELEQIPFVIDDEIETVKTTKETREIFKDLGIMDDIVRAKKGRKIKSGKGKLRGRKYRTPKGPLVVVGNDRGISLGARNHAGVDVVEVNNINAELLAPGTHAGRLTIYTKSAIEKLGDLFQKNRS.

Residues 47-67 form a disordered region; the sequence is WGTDPMAGKRTTAESFGSGRG.

Belongs to the universal ribosomal protein uL4 family. Part of the 50S ribosomal subunit.

Functionally, one of the primary rRNA binding proteins, this protein initially binds near the 5'-end of the 23S rRNA. It is important during the early stages of 50S assembly. It makes multiple contacts with different domains of the 23S rRNA in the assembled 50S subunit and ribosome. Its function is as follows. Forms part of the polypeptide exit tunnel. The chain is Large ribosomal subunit protein uL4 from Methanosphaera stadtmanae (strain ATCC 43021 / DSM 3091 / JCM 11832 / MCB-3).